A 192-amino-acid polypeptide reads, in one-letter code: A-type ATP synthase subunit E (192 aa).

It belongs to the V-ATPase E subunit family. In terms of assembly, has multiple subunits with at least A(3), B(3), C, D, E, F, H, I and proteolipid K(x).

The protein resides in the cell membrane. Functionally, component of the A-type ATP synthase that produces ATP from ADP in the presence of a proton gradient across the membrane. The protein is A-type ATP synthase subunit E of Halorubrum lacusprofundi (strain ATCC 49239 / DSM 5036 / JCM 8891 / ACAM 34).